Reading from the N-terminus, the 118-residue chain is UPF0295 protein BCG9842_B4782 (118 aa).

Transmembrane regions (helical) follow at residues 12–32 (IRTF…LGVF) and 43–63 (FMMV…WIGM).

Belongs to the UPF0295 family.

The protein resides in the cell membrane. The protein is UPF0295 protein BCG9842_B4782 of Bacillus cereus (strain G9842).